The chain runs to 348 residues: Rhodopsin (348 aa).

M1 carries the N-acetylmethionine modification. At 1 to 36 (MNGTEGPNFYVPYSNKSGVVRSPYEEPQYYLAEPWM) the chain is on the extracellular side. 2 N-linked (GlcNAc...) asparagine glycosylation sites follow: N2 and N15. The helical transmembrane segment at 37-61 (FSCLAAYMFMLIVLGFPINFLTLYV) threads the bilayer. Topologically, residues 62–73 (TIQHKKLRTPLN) are cytoplasmic. Residues 74-96 (YILLNLAVADLFMVICGFTTTLV) traverse the membrane as a helical segment. Topologically, residues 97–110 (TSLNGYFVFGTTGC) are extracellular. Residues C110 and C187 are joined by a disulfide bond. A helical membrane pass occupies residues 111–133 (LVEGFFATTGGEVALWALVVLAI). A 'Ionic lock' involved in activated form stabilization motif is present at residues 134 to 136 (ERY). Topologically, residues 134-152 (ERYIVVCKPMSNFRFGENH) are cytoplasmic. The chain crosses the membrane as a helical span at residues 153–173 (AIMGVAFTWIMALACSVPPIF). The Extracellular segment spans residues 174–202 (GWSRYIPEGMQCSCGIDYYTLNPEFNNES). Position 201 (E201) interacts with Zn(2+). A helical membrane pass occupies residues 203–224 (FVIYMFVVHFIIPLTVIFFCYG). The Cytoplasmic portion of the chain corresponds to 225 to 252 (QLVFTVKEAAAQQQESATTQKAEKEVTR). A helical membrane pass occupies residues 253–274 (MVIIMVIAFLICWVPYASVAFY). Over 275-286 (IFTHQGSDFGPI) the chain is Extracellular. Q279 contacts Zn(2+). Residues 287–308 (FMTLPAFFAKSSSIYNPVIYIM) form a helical membrane-spanning segment. At K296 the chain carries N6-(retinylidene)lysine. Residues 309–348 (MNKQFRNCMITTLCCGKNPLGDDEASTTASKTETSQVAPA) are Cytoplasmic-facing. Residues C322 and C323 are each lipidated (S-palmitoyl cysteine). An interaction with SAG region spans residues 330–348 (DDEASTTASKTETSQVAPA). S334 is subject to Phosphoserine. 2 positions are modified to phosphothreonine: T335 and T336. S338 carries the post-translational modification Phosphoserine. T340 and T342 each carry phosphothreonine. Position 343 is a phosphoserine (S343).

Belongs to the G-protein coupled receptor 1 family. Opsin subfamily. In terms of assembly, homodimer. May form a complex composed of RHO, GRK1 and RCVRN in a Ca(2+)-dependent manner; RCVRN prevents the interaction between GRK1 and RHO. Interacts with GRK1. Interacts (phosphorylated form) with SAG. Interacts with GNAT1. Interacts with GNAT3. SAG and G-proteins compete for a common binding site. Interacts with PRCD; the interaction promotes PRCD stability. Forms a complex with ASAP1 and ARF4. Forms a complex with ASAP1, RAB11A, Rabin8/RAB3IP, ARF4 and RAB11FIP3; the complex regulates Golgi-to-cilia rhodopsin/RHO transport in photoreceptors. Post-translationally, phosphorylated on some or all of the serine and threonine residues present in the C-terminal region. Contains one covalently linked retinal chromophore. Upon light absorption, the covalently bound 11-cis-retinal is converted to all-trans-retinal. After hydrolysis of the Schiff base and release of the covalently bound all-trans-retinal, active rhodopsin is regenerated by binding of a fresh molecule of 11-cis-retinal.

It localises to the membrane. Its subcellular location is the cell projection. The protein resides in the cilium. The protein localises to the photoreceptor outer segment. Photoreceptor required for image-forming vision at low light intensity. Required for photoreceptor cell viability after birth. Light-induced isomerization of 11-cis to all-trans retinal triggers a conformational change that activates signaling via G-proteins. Subsequent receptor phosphorylation mediates displacement of the bound G-protein alpha subunit by the arrestin SAG and terminates signaling. The protein is Rhodopsin (RHO) of Sminthopsis crassicaudata (Fat-tailed dunnart).